Here is a 507-residue protein sequence, read N- to C-terminus: Cobyric acid synthase (507 aa).

Residues 259 to 456 (EIQIAVIKLP…LHGIFDNGTW (198 aa)) form the GATase cobBQ-type domain. Cysteine 340 functions as the Nucleophile in the catalytic mechanism. Residue histidine 448 is part of the active site.

The protein belongs to the CobB/CobQ family. CobQ subfamily.

Its pathway is cofactor biosynthesis; adenosylcobalamin biosynthesis. Functionally, catalyzes amidations at positions B, D, E, and G on adenosylcobyrinic A,C-diamide. NH(2) groups are provided by glutamine, and one molecule of ATP is hydrogenolyzed for each amidation. This Prochlorococcus marinus (strain SARG / CCMP1375 / SS120) protein is Cobyric acid synthase.